A 307-amino-acid polypeptide reads, in one-letter code: Bifunctional protein FolD (307 aa).

NADP(+) is bound by residues 165–167 (GRS), serine 190, and isoleucine 231.

The protein belongs to the tetrahydrofolate dehydrogenase/cyclohydrolase family. In terms of assembly, homodimer.

It catalyses the reaction (6R)-5,10-methylene-5,6,7,8-tetrahydrofolate + NADP(+) = (6R)-5,10-methenyltetrahydrofolate + NADPH. It carries out the reaction (6R)-5,10-methenyltetrahydrofolate + H2O = (6R)-10-formyltetrahydrofolate + H(+). Its pathway is one-carbon metabolism; tetrahydrofolate interconversion. Catalyzes the oxidation of 5,10-methylenetetrahydrofolate to 5,10-methenyltetrahydrofolate and then the hydrolysis of 5,10-methenyltetrahydrofolate to 10-formyltetrahydrofolate. This chain is Bifunctional protein FolD, found in Koribacter versatilis (strain Ellin345).